We begin with the raw amino-acid sequence, 356 residues long: 3-dehydroquinate synthase (356 aa).

NAD(+) contacts are provided by residues 101–105 (GVIGD), 125–126 (TT), Lys-138, and Lys-147. Positions 180, 243, and 260 each coordinate Zn(2+).

Belongs to the sugar phosphate cyclases superfamily. Dehydroquinate synthase family. The cofactor is Co(2+). It depends on Zn(2+) as a cofactor. NAD(+) serves as cofactor.

It localises to the cytoplasm. It carries out the reaction 7-phospho-2-dehydro-3-deoxy-D-arabino-heptonate = 3-dehydroquinate + phosphate. It participates in metabolic intermediate biosynthesis; chorismate biosynthesis; chorismate from D-erythrose 4-phosphate and phosphoenolpyruvate: step 2/7. Catalyzes the conversion of 3-deoxy-D-arabino-heptulosonate 7-phosphate (DAHP) to dehydroquinate (DHQ). The polypeptide is 3-dehydroquinate synthase (Alkaliphilus metalliredigens (strain QYMF)).